The sequence spans 25 residues: Ocellatin-L2 (25 aa).

A Leucine amide modification is found at L25.

This sequence belongs to the frog skin active peptide (FSAP) family. Ocellatin subfamily. In terms of tissue distribution, expressed by the skin glands.

It is found in the secreted. Shows a low activity in stimulating insulin release from rat BRIN-BD11 beta cells, and acts without loss of integrity of the plasma membrane. Does not show antibacterial (E.coli and S.aureus). Does not show hemolytic activity against human erythrocytes. The sequence is that of Ocellatin-L2 from Leptodactylus laticeps (Santa Fe frog).